Reading from the N-terminus, the 84-residue chain is uncharacterized protein (84 aa).

This is an uncharacterized protein from Helicobacter pylori (strain ATCC 700392 / 26695) (Campylobacter pylori).